Here is a 230-residue protein sequence, read N- to C-terminus: Flagellar L-ring protein (230 aa).

The signal sequence occupies residues 1–21; that stretch reads MMLKTVLRLPVCAALLALAAG. The N-palmitoyl cysteine moiety is linked to residue Cys22. Residue Cys22 is the site of S-diacylglycerol cysteine attachment. The segment at 34–53 is disordered; it reads PLTAPPPPPPQPSARPNGSI. The span at 36–46 shows a compositional bias: pro residues; sequence TAPPPPPPQPS.

The protein belongs to the FlgH family. The basal body constitutes a major portion of the flagellar organelle and consists of four rings (L,P,S, and M) mounted on a central rod.

The protein localises to the cell outer membrane. It localises to the bacterial flagellum basal body. In terms of biological role, assembles around the rod to form the L-ring and probably protects the motor/basal body from shearing forces during rotation. The polypeptide is Flagellar L-ring protein (Bordetella bronchiseptica (strain ATCC BAA-588 / NCTC 13252 / RB50) (Alcaligenes bronchisepticus)).